The primary structure comprises 235 residues: Putative HAD-hydrolase YfnB (235 aa).

Residue Asp-10 is the Nucleophile of the active site.

The protein belongs to the HAD-like hydrolase superfamily. YjjG family.

This is Putative HAD-hydrolase YfnB (yfnB) from Bacillus subtilis (strain 168).